The primary structure comprises 89 residues: Elongation factor 1-beta (89 aa).

Belongs to the EF-1-beta/EF-1-delta family.

Functionally, promotes the exchange of GDP for GTP in EF-1-alpha/GDP, thus allowing the regeneration of EF-1-alpha/GTP that could then be used to form the ternary complex EF-1-alpha/GTP/AAtRNA. This chain is Elongation factor 1-beta, found in Methanocella arvoryzae (strain DSM 22066 / NBRC 105507 / MRE50).